The sequence spans 618 residues: Probable Xaa-Pro aminopeptidase P (618 aa).

Residues aspartate 415, aspartate 426, glutamate 524, and glutamate 538 each coordinate Mn(2+).

It belongs to the peptidase M24B family. The cofactor is Mn(2+).

It carries out the reaction Release of any N-terminal amino acid, including proline, that is linked to proline, even from a dipeptide or tripeptide.. Catalyzes the removal of a penultimate prolyl residue from the N-termini of peptides. The polypeptide is Probable Xaa-Pro aminopeptidase P (AMPP) (Pyricularia oryzae (strain 70-15 / ATCC MYA-4617 / FGSC 8958) (Rice blast fungus)).